Reading from the N-terminus, the 172-residue chain is uncharacterized protein (172 aa).

The next 3 membrane-spanning stretches (helical) occupy residues 16–36, 68–88, and 89–109; these read IMIV…AYLI, SFLI…AGEL, and VISH…YIII.

Its subcellular location is the cell membrane. This is an uncharacterized protein from Methanocaldococcus jannaschii (strain ATCC 43067 / DSM 2661 / JAL-1 / JCM 10045 / NBRC 100440) (Methanococcus jannaschii).